The chain runs to 127 residues: Glycine cleavage system H protein (127 aa).

In terms of domain architecture, Lipoyl-binding spans 22–103; that stretch reads EAYIGITDFA…AFANWIIKVE (82 aa). An N6-lipoyllysine modification is found at Lys63.

The protein belongs to the GcvH family. As to quaternary structure, the glycine cleavage system is composed of four proteins: P, T, L and H. (R)-lipoate is required as a cofactor.

The glycine cleavage system catalyzes the degradation of glycine. The H protein shuttles the methylamine group of glycine from the P protein to the T protein. In Alkaliphilus oremlandii (strain OhILAs) (Clostridium oremlandii (strain OhILAs)), this protein is Glycine cleavage system H protein.